We begin with the raw amino-acid sequence, 399 residues long: MSEKHLFTSESVSEGHPDKVADQISDAILDAILAQDPHAHVACETVVYTGTVNVFGEISTSAYVDIAHVVRETIKKIGYTDSENGFDYKSVGVHVSLVEQSSDIAQGVNEAEEVRDKNGQLVDPLDLIGAGDQGMMFGFATNETAEYMPLAISLSHKLVKKLADLRKSGEISYLRPDAKSQVTVEYDNNGKAKRVDTVVISTQHAATATNEEIHDDVINKVIKAIIPAELLDDETKYFINPTGRFVIGGPQGDSGLTGRKIIVDTYGGYAPHGGGAFSGKDATKVDRSASYAARYVAKNIVAAGLADKAQIQLSYAIGVATPTSINVETFGTGKVSDDELLAAIRKVFDLRPAGIIQMLDLLRPIYGQTAAYGHFGRTDIELPWEQTDKVEELKAVLGK.

His16 provides a ligand contact to ATP. Asp18 is a binding site for Mg(2+). Residue Glu44 participates in K(+) binding. Residues Glu57 and Gln100 each coordinate L-methionine. Positions 100-110 are flexible loop; sequence QSSDIAQGVNE. Residues 177–179, 244–245, Asp253, 259–260, Ala276, and Lys280 contribute to the ATP site; these read DAK, RF, and RK. Residue Asp253 participates in L-methionine binding. Lys284 lines the L-methionine pocket.

The protein belongs to the AdoMet synthase family. Homotetramer; dimer of dimers. Requires Mg(2+) as cofactor. K(+) is required as a cofactor.

The protein resides in the cytoplasm. The enzyme catalyses L-methionine + ATP + H2O = S-adenosyl-L-methionine + phosphate + diphosphate. Its pathway is amino-acid biosynthesis; S-adenosyl-L-methionine biosynthesis; S-adenosyl-L-methionine from L-methionine: step 1/1. In terms of biological role, catalyzes the formation of S-adenosylmethionine (AdoMet) from methionine and ATP. The overall synthetic reaction is composed of two sequential steps, AdoMet formation and the subsequent tripolyphosphate hydrolysis which occurs prior to release of AdoMet from the enzyme. The polypeptide is S-adenosylmethionine synthase (Lactococcus lactis subsp. cremoris (strain MG1363)).